The following is an 81-amino-acid chain: Sulfur carrier protein TusA (81 aa).

Cys-19 serves as the catalytic Cysteine persulfide intermediate.

Belongs to the sulfur carrier protein TusA family.

The protein resides in the cytoplasm. Functionally, sulfur carrier protein which probably makes part of a sulfur-relay system. This Shewanella woodyi (strain ATCC 51908 / MS32) protein is Sulfur carrier protein TusA.